We begin with the raw amino-acid sequence, 678 residues long: ABC transporter F family member 2 (678 aa).

2 ABC transporter domains span residues 84–342 (VRLE…EAQY) and 411–626 (VTVK…AREL). ATP contacts are provided by residues 116 to 123 (GVNGAGKT) and 443 to 450 (GPNGCGKS). The disordered stretch occupies residues 630–678 (AELEEKAPKVKAKSKMSKAEREARKKQKMKAFQASKKKSKSSKNAKRWN). Residues 653–678 (RKKQKMKAFQASKKKSKSSKNAKRWN) show a composition bias toward basic residues.

The protein belongs to the ABC transporter superfamily. ABCF family. EF3 (TC 3.A.1.121) subfamily.

The chain is ABC transporter F family member 2 (ABCF2) from Arabidopsis thaliana (Mouse-ear cress).